We begin with the raw amino-acid sequence, 293 residues long: Histamine N-methyltransferase (293 aa).

Residue E28 coordinates substrate. S-adenosyl-L-methionine-binding residues include G60, E89, Q94, S120, and I142. N283 serves as a coordination point for substrate.

It belongs to the class I-like SAM-binding methyltransferase superfamily. HNMT family. In terms of assembly, monomer.

The protein resides in the cytoplasm. The catalysed reaction is histamine + S-adenosyl-L-methionine = N(tau)-methylhistamine + S-adenosyl-L-homocysteine + H(+). In terms of biological role, inactivates histamine by N-methylation. Plays an important role in degrading histamine and in regulating the airway response to histamine. The chain is Histamine N-methyltransferase (hnmt) from Xenopus tropicalis (Western clawed frog).